The primary structure comprises 29 residues: Glucagon (29 aa).

It belongs to the glucagon family.

It localises to the secreted. Its function is as follows. Glucagon plays a key role in glucose metabolism and homeostasis. Regulates blood glucose by increasing gluconeogenesis and decreasing glycolysis. The sequence is that of Glucagon (gcg) from Polypterus senegalus (Senegal bichir).